The chain runs to 26 residues: ALWKDMLSGIGKLAGQAALGAVKTLV.

Val-26 carries the post-translational modification Valine amide.

As to expression, expressed by the skin glands.

Its subcellular location is the secreted. In terms of biological role, has antimicrobial activity. The sequence is that of Dermaseptin-J4 from Phasmahyla jandaia (Jandaia leaf frog).